Consider the following 212-residue polypeptide: uncharacterized protein (212 aa).

Positions 87–105 (NNNNNNNNNNNHNHNNSNN) are enriched in low complexity. The disordered stretch occupies residues 87–107 (NNNNNNNNNNNHNHNNSNNTA).

This is an uncharacterized protein from Saccharomyces cerevisiae (strain ATCC 204508 / S288c) (Baker's yeast).